Reading from the N-terminus, the 392-residue chain is Neutrophil cytosol factor 1 (392 aa).

The 122-residue stretch at 4 to 125 folds into the PX domain; that stretch reads HFIRHIALLG…NFFKVRPDDL (122 aa). SH3 domains are found at residues 156–215 and 226–285; these read IILQ…PLDS and YAGE…KAGQ. Positions 290-392 are disordered; that stretch reads AKSQIKSRGA…STKRKLASAV (103 aa). Phosphoserine occurs at positions 304 and 305. Residues 310–319 show a composition bias toward basic residues; that stretch reads HSIHQRSRKR. Serine 321, serine 329, and serine 348 each carry phosphoserine. Residues 376 to 385 show a composition bias toward basic and acidic residues; it reads ILHRCSESTK.

Component of the phagocyte NADPH oxidase complex composed of an obligatory core heterodimer formed by the membrane proteins CYBA and CYBB and the cytosolic regulatory subunits NCF1/p47-phox, NCF2/p67-phox, NCF4/p40-phox and the small GTPase RAC1 or RAC2. Part of a cytosolic complex composed at least by NCF1, NCF2 and NCF4. Interacts (via C-terminus) with NCF2 (via the C-terminal SH3 domain). Interacts with NCF4. Interacts with CYBB. Interacts (via the second SH3 domain) with CYBA; interaction is phosphorylation-dependent. Interacts with NOXA1. Interacts with ADAM15. Interacts with TRAF4. Interacts with FASLG. Interacts with PARK7 (via C-terminus); the interaction is enhanced by LPS and modulates NCF1 phosphorylation and membrane translocation. In terms of processing, phosphorylated by PRKCD; phosphorylation induces activation of NCF1, leading to assembly and activation of the NADPH oxidase complex.

It localises to the cytoplasm. The protein resides in the cytosol. Its subcellular location is the membrane. Its function is as follows. Subunit of the phagocyte NADPH oxidase complex that mediates the transfer of electrons from cytosolic NADPH to O2 to produce the superoxide anion (O2(-)). In the activated complex, electrons are first transferred from NADPH to flavin adenine dinucleotide (FAD) and subsequently transferred via two heme molecules to molecular oxygen, producing superoxide through an outer-sphere reaction. Activation of the NADPH oxidase complex is initiated by the assembly of cytosolic subunits of the NADPH oxidase complex with the core NADPH oxidase complex to form a complex at the plasma membrane or phagosomal membrane. This activation process is initiated by phosphorylation dependent binding of the cytosolic NCF1/p47-phox subunit to the C-terminus of CYBA/p22-phox. The chain is Neutrophil cytosol factor 1 from Bos taurus (Bovine).